We begin with the raw amino-acid sequence, 51 residues long: Sperm protamine P1 (51 aa).

It belongs to the protamine P1 family. Testis.

Its subcellular location is the nucleus. It is found in the chromosome. In terms of biological role, protamines substitute for histones in the chromatin of sperm during the haploid phase of spermatogenesis. They compact sperm DNA into a highly condensed, stable and inactive complex. This Trachypithecus francoisi (Francois' leaf monkey) protein is Sperm protamine P1 (PRM1).